Consider the following 276-residue polypeptide: 2,3,4,5-tetrahydropyridine-2,6-dicarboxylate N-succinyltransferase (276 aa).

2 residues coordinate substrate: arginine 104 and aspartate 141.

This sequence belongs to the transferase hexapeptide repeat family. Homotrimer.

Its subcellular location is the cytoplasm. The catalysed reaction is (S)-2,3,4,5-tetrahydrodipicolinate + succinyl-CoA + H2O = (S)-2-succinylamino-6-oxoheptanedioate + CoA. It participates in amino-acid biosynthesis; L-lysine biosynthesis via DAP pathway; LL-2,6-diaminopimelate from (S)-tetrahydrodipicolinate (succinylase route): step 1/3. The protein is 2,3,4,5-tetrahydropyridine-2,6-dicarboxylate N-succinyltransferase of Legionella pneumophila (strain Corby).